The chain runs to 788 residues: Elongator complex protein 2 (788 aa).

WD repeat units follow at residues 13–51 (GANK…NKGV), 57–96 (GHEA…HLQC), 102–139 (HYSK…DEFG), 200–243 (GHED…LIDD), 279–318 (GHDD…GIWV), 336–377 (GSSG…ICDQ), 383–422 (GATK…ASGR), and 437–475 (IHGY…AGML). Residues 490–530 (PDSATVPVLGLSNKAGEDDANEDDEEEEGGNKETPDITDPL) form a disordered region. At Ser-492 the chain carries Phosphoserine. Acidic residues predominate over residues 507-517 (DDANEDDEEEE). 5 WD repeats span residues 556-600 (GHGF…EIKP), 604-643 (FHSL…NTFE), 651-692 (PHTR…ADDY), 699-742 (KHTK…FELI), and 750-788 (TPAD…LAYE).

Belongs to the WD repeat ELP2 family. In terms of assembly, component of the elongator complex which consists of ELP1/IKI3, ELP2, ELP3, ELP4, ELP5/IKI1 and ELP6. The elongator complex is composed of two copies of the Elp123 subcomplex (composed of ELP1/IKI3, ELP2 and ELP3) and two copies of the Elp456 subcomplex (composed of ELP4, ELP5/IKI1 and ELP6). The Elp123 subcomplex forms a two-lobed scaffold, which binds the Elp456 subcomplex asymmetrically. In the complex, ELP2 interacts with ELP1/IKI3. In each lobe, ELP2 is tightly sandwiched between ELP1/IKI3 and ELP3. The Elp123 subcomplex binds tRNA through ELP1/IKI3 and ELP3 and can bind 2 tRNAs simultaneously. tRNA-binding induces conformational rearrangements which precisely position the targeted anticodon base in the active site. The Elp456 subcomplex binds tRNA and has ATPase activity. Interacts with KTI11/DPH3.

It is found in the cytoplasm. The protein localises to the nucleus. It functions in the pathway tRNA modification; 5-methoxycarbonylmethyl-2-thiouridine-tRNA biosynthesis. Component of the elongator complex, a multiprotein complex which is required for multiple tRNA modifications, including mcm5U (5-methoxycarbonylmethyl uridine), mcm5s2U (5-methoxycarbonylmethyl-2-thiouridine), and ncm5U (5-carbamoylmethyl uridine). The elongator complex catalyzes formation of carboxymethyluridine in the wobble base at position 34 in tRNAs. It functions as a gamma-toxin target (TOT); disruption of the complex confers resistance to Kluyveromyces lactis toxin zymocin (pGKL1 killer toxin). May also be involved in sensitivity to Pichia inositovora toxin. ELP2 binds to microtubules. Independently, ELP2 may be involved in polarized exocytosis. This is Elongator complex protein 2 (ELP2) from Saccharomyces cerevisiae (strain ATCC 204508 / S288c) (Baker's yeast).